The primary structure comprises 182 residues: Putative manganese efflux pump MntP (182 aa).

The next 6 helical transmembrane spans lie at 6–26 (TVLV…GVGT), 37–57 (LSFH…FVGS), 59–79 (AADL…LFIG), 104–126 (SSLV…SFGI), 131–149 (LFLS…TWGA), and 164–181 (METV…KLLL).

It belongs to the MntP (TC 9.B.29) family.

It localises to the cell inner membrane. Probably functions as a manganese efflux pump. The sequence is that of Putative manganese efflux pump MntP from Syntrophobacter fumaroxidans (strain DSM 10017 / MPOB).